The primary structure comprises 1563 residues: Ribulose bisphosphate carboxylase (1563 aa).

2 residues coordinate substrate: His32 and Ser79. Positions 197–217 (LAAAFVGASTTRKASSVARRA) are cleaved as a propeptide — linker. Asn328 lines the substrate pocket. Lys383 (proton acceptor) is an active-site residue. A substrate-binding site is contributed by Lys385. Mg(2+)-binding residues include Lys408, Asp410, and Glu411. Lys408 bears the N6-carboxylysine mark. The active-site Proton acceptor is the His504. Positions 505, 538, and 585 each coordinate substrate. A propeptide spans 703–723 (LAAAFVGASTTRKASSVARRA) (linker). Asn834 lines the substrate pocket. The Proton acceptor role is filled by Lys889. Residue Lys891 participates in substrate binding. Residues Lys914, Asp916, and Glu917 each coordinate Mg(2+). Residue Lys914 is modified to N6-carboxylysine. His1010 serves as the catalytic Proton acceptor. Residues Arg1011, His1044, and Ser1091 each contribute to the substrate site. A propeptide spans 1209–1229 (LAAAFVGASTTRKASSVARRA) (linker). Asn1340 contacts substrate. Residue Lys1395 is the Proton acceptor of the active site. Substrate is bound at residue Lys1397. 3 residues coordinate Mg(2+): Lys1420, Asp1422, and Glu1423. The residue at position 1420 (Lys1420) is an N6-carboxylysine. The active-site Proton acceptor is His1516. Substrate is bound by residues Arg1517 and His1550.

The protein belongs to the RuBisCO large chain family. Type II subfamily. Homodimer. It depends on Mg(2+) as a cofactor. In Western blots an approximately 220 kDa polyprotein and 2 smaller proteins of about 55 and 52 kDa are detected, suggesting the polyprotein may be cleaved at one end of the linker and then at the other end to give mature RuBisCO.

The protein resides in the plastid. Its subcellular location is the chloroplast. The enzyme catalyses 2 (2R)-3-phosphoglycerate + 2 H(+) = D-ribulose 1,5-bisphosphate + CO2 + H2O. It carries out the reaction D-ribulose 1,5-bisphosphate + O2 = 2-phosphoglycolate + (2R)-3-phosphoglycerate + 2 H(+). Functionally, ruBisCO catalyzes two reactions: the carboxylation of D-ribulose 1,5-bisphosphate, the primary event in carbon dioxide fixation, as well as the oxidative fragmentation of the pentose substrate. Both reactions occur simultaneously and in competition at the same active site. The sequence is that of Ribulose bisphosphate carboxylase (rbcL) from Prorocentrum minimum (Dinoflagellate).